Here is a 377-residue protein sequence, read N- to C-terminus: Sterol 24-C-methyltransferase erg6 (377 aa).

It belongs to the class I-like SAM-binding methyltransferase superfamily. Erg6/SMT family.

It is found in the microsome. Its subcellular location is the mitochondrion. The catalysed reaction is lanosterol + S-adenosyl-L-methionine = eburicol + S-adenosyl-L-homocysteine + H(+). It participates in steroid metabolism; ergosterol biosynthesis. Specific and total activity is decreased in presence of alpha-bisabolol. Its function is as follows. Sterol 24-C-methyltransferase; part of the third module of ergosterol biosynthesis pathway that includes the late steps of the pathway. Methylates lanosterol at C-24 to produce eburicol. The third module or late pathway involves the ergosterol synthesis itself through consecutive reactions that mainly occur in the endoplasmic reticulum (ER) membrane. Firstly, the squalene synthase erg9 catalyzes the condensation of 2 farnesyl pyrophosphate moieties to form squalene, which is the precursor of all steroids. Squalene synthase is crucial for balancing the incorporation of farnesyl diphosphate (FPP) into sterol and nonsterol isoprene synthesis. Secondly, squalene is converted into lanosterol by the consecutive action of the squalene epoxidase erg1 and the lanosterol synthase erg7. Then, the delta(24)-sterol C-methyltransferase erg6 methylates lanosterol at C-24 to produce eburicol. Eburicol is the substrate of the sterol 14-alpha demethylase encoded by cyp51A and cyp51B, to yield 4,4,24-trimethyl ergosta-8,14,24(28)-trienol. The C-14 reductase erg24 then reduces the C14=C15 double bond which leads to 4,4-dimethylfecosterol. A sequence of further demethylations at C-4, involving the C-4 demethylation complex containing the C-4 methylsterol oxidases erg25A or erg25B, the sterol-4-alpha-carboxylate 3-dehydrogenase erg26 and the 3-keto-steroid reductase erg27, leads to the production of fecosterol via 4-methylfecosterol. The C-8 sterol isomerase erg2 then catalyzes the reaction which results in unsaturation at C-7 in the B ring of sterols and thus converts fecosterol to episterol. The sterol-C5-desaturase erg3B then catalyzes the introduction of a C-5 double bond in the B ring to produce 5-dehydroepisterol. The 2 other sterol-C5-desaturases, erg3A and erg3C, seem to be less important in ergosterol biosynthesis. The C-22 sterol desaturase erg5 further converts 5-dehydroepisterol into ergosta-5,7,22,24(28)-tetraen-3beta-ol by forming the C-22(23) double bond in the sterol side chain. Finally, ergosta-5,7,22,24(28)-tetraen-3beta-ol is substrate of the C-24(28) sterol reductases erg4A and erg4B to produce ergosterol. Possible alternative sterol biosynthetic pathways might exist from fecosterol to ergosterol, depending on the activities of the erg3 isoforms. This is Sterol 24-C-methyltransferase erg6 from Aspergillus fumigatus (strain ATCC MYA-4609 / CBS 101355 / FGSC A1100 / Af293) (Neosartorya fumigata).